The chain runs to 269 residues: uncharacterized protein (269 aa).

Residues Met-1–Lys-16 are compositionally biased toward pro residues. 2 disordered regions span residues Met-1–Gly-110 and Ile-157–Gln-269. Residues Ala-21 to Ser-45 are compositionally biased toward polar residues. A compositionally biased stretch (low complexity) spans Thr-46–Gln-58. A compositionally biased stretch (polar residues) spans Ser-80–Ile-93. Low complexity predominate over residues Gln-159–Pro-181. Residues Leu-182–Ser-195 are compositionally biased toward polar residues. Residues Pro-198 to Ile-213 are compositionally biased toward pro residues.

This is an uncharacterized protein from Dictyostelium discoideum (Social amoeba).